Reading from the N-terminus, the 128-residue chain is Aspartate 1-decarboxylase (128 aa).

Ser25 (schiff-base intermediate with substrate; via pyruvic acid) is an active-site residue. Ser25 carries the pyruvic acid (Ser) modification. Thr57 contacts substrate. Tyr58 functions as the Proton donor in the catalytic mechanism. 73 to 75 provides a ligand contact to substrate; sequence GSA.

It belongs to the PanD family. As to quaternary structure, heterooctamer of four alpha and four beta subunits. Pyruvate is required as a cofactor. Post-translationally, is synthesized initially as an inactive proenzyme, which is activated by self-cleavage at a specific serine bond to produce a beta-subunit with a hydroxyl group at its C-terminus and an alpha-subunit with a pyruvoyl group at its N-terminus.

Its subcellular location is the cytoplasm. The catalysed reaction is L-aspartate + H(+) = beta-alanine + CO2. It functions in the pathway cofactor biosynthesis; (R)-pantothenate biosynthesis; beta-alanine from L-aspartate: step 1/1. Functionally, catalyzes the pyruvoyl-dependent decarboxylation of aspartate to produce beta-alanine. In Burkholderia multivorans (strain ATCC 17616 / 249), this protein is Aspartate 1-decarboxylase.